We begin with the raw amino-acid sequence, 364 residues long: Monocarboxylate 2-oxoacid-binding periplasmic protein all3028 (364 aa).

Residues M1 to N26 form the signal peptide. Residues Y103–Y104, Q160, and R181 each bind substrate. Q160 provides a ligand contact to Na(+). Na(+) is bound by residues E218, W219, and E244.

Belongs to the bacterial solute-binding protein 7 family. In terms of assembly, homodimer. The complex comprises the extracytoplasmic solute receptor protein all3028, and the two putative transmembrane proteins alr3026 and alr3027.

Its subcellular location is the periplasm. With respect to regulation, pyruvate uptake inhibited by 2-oxobutyrate, 2-oxovalerate, 2-oxoisovalerate, 2-oxoisocaproate and 2-oxo-3-methylvalerate. Part of the tripartite ATP-independent periplasmic (TRAP) transport system involved in the uptake of monocarboxylate 2-oxoacids. This protein specifically binds monocarboxylate 2-oxoacids including pyruvate, 2-oxobutyrate, 2-oxovalerate, 2-oxoisovalerate, 2-oxoisocaproate and 2-oxo-3-methylvalerate. Is not able to bind mannitol. This chain is Monocarboxylate 2-oxoacid-binding periplasmic protein all3028, found in Nostoc sp. (strain PCC 7120 / SAG 25.82 / UTEX 2576).